Reading from the N-terminus, the 364-residue chain is 2-oxoglutarate-dependent dioxygenase imqE (364 aa).

A disordered region spans residues 73 to 92; the sequence is KQKAAHPPGPNPQRGWSGIG. A Fe2OG dioxygenase domain is found at 199 to 315; the sequence is DGSELRLLHY…RWSAAYFFKA (117 aa). 3 residues coordinate Fe cation: histidine 227, aspartate 229, and histidine 287. Arginine 306 provides a ligand contact to 2-oxoglutarate.

It belongs to the iron/ascorbate-dependent oxidoreductase family. Fe(2+) serves as cofactor.

Its pathway is secondary metabolite biosynthesis. In terms of biological role, 2-oxoglutarate-dependent dioxygenase; part of the gene cluster that mediates the biosynthesis of imizoquins A to D, tripeptide-derived alkaloids that serve a protective role against oxidative stress that are essential for normal germination. ImqB is a canonical three-module NRPS that assembles the tripeptide backbone of the imizoquins via condensation of Trp, Tyr, and Leu-derived precursors. N-methylation by imqF and phenol oxidation by imqC, followed by cyclization via the FAD-dependent oxidase imqH carry out the three-step transformation of L-tyrosine into tetrahydroisoquinoline. Importantly, this sequence requires the presence of a free amine in the tyrosine moiety, indicating that isoquinoline formation occurs prior to peptide bond formation. The imidazolidin-4-one ring of imizoquins could form following additional oxidation of the methyl-derived bridgehead carbon by imqH. Lastly, O-methylation by imqG and leucine hydroxylation by imqE complete biosynthesis of the imizoquins. The protein is 2-oxoglutarate-dependent dioxygenase imqE of Aspergillus flavus (strain ATCC 200026 / FGSC A1120 / IAM 13836 / NRRL 3357 / JCM 12722 / SRRC 167).